Reading from the N-terminus, the 98-residue chain is Cytochrome c2 (98 aa).

Gln1 carries the post-translational modification Pyrrolidone carboxylic acid. Heme c is bound by residues Cys10, Cys13, His14, and Met76.

Belongs to the cytochrome c family. In terms of processing, binds 1 heme c group covalently per subunit.

The protein resides in the periplasm. Functionally, cytochrome c2 is found mainly in purple, non-sulfur, photosynthetic bacteria where it functions as the electron donor to the oxidized bacteriochlorophyll in the photophosphorylation pathway. However, it may also have a role in the respiratory chain and is found in some non-photosynthetic bacteria. The chain is Cytochrome c2 from Rhodoplanes tepidamans (Rhodoplanes cryptolactis).